Here is a 400-residue protein sequence, read N- to C-terminus: MLKVEMLSTGDEVLHGQIVDTNAAWLADFFFHQGLPLSRRNTVGDNLDDLVTILRERSQHADVLIVNGGLGPTSDDLSALAAATAKGEGLVLHEAWLKEMERYFHERGRVMAPSNRKQAELPASAEFINNPVGTACGFAVQLNRCLMFFTPGVPSEFKVMVEHEILPRLRERFSLPQLPVCLRLTTFGRSESDLAQSLDTLQLPPGVTMGYRSSMPIIELKLTGPASEQQAMEKLWLDVKRVAGQSVIFEGTEGLPAQISRELQNRQFSLTLSEQFTGGLLALQLSRAGAPLLACEVVPSQEETLAQTAHWITERRANHFAGLALAVSGFENEHLNFALATPDGTFALRVRFSTTRYSLAIRQEVCAMMALNMLRRWLNGQDIASEHGWIEVIESMTLSV.

The protein belongs to the CinA family.

In Escherichia coli (strain SE11), this protein is CinA-like protein.